The following is a 475-amino-acid chain: Ribulose bisphosphate carboxylase large chain (475 aa).

The propeptide occupies 1-2 (MS). The residue at position 3 (Pro3) is an N-acetylproline. An N6,N6,N6-trimethyllysine modification is found at Lys14. Residues Asn123 and Thr173 each contribute to the substrate site. Residue Lys175 is the Proton acceptor of the active site. Position 177 (Lys177) interacts with substrate. Positions 201, 203, and 204 each coordinate Mg(2+). An N6-carboxylysine modification is found at Lys201. His294 acts as the Proton acceptor in catalysis. Substrate contacts are provided by Arg295, His327, and Ser379.

Belongs to the RuBisCO large chain family. Type I subfamily. In terms of assembly, heterohexadecamer of 8 large chains and 8 small chains; disulfide-linked. The disulfide link is formed within the large subunit homodimers. It depends on Mg(2+) as a cofactor. The disulfide bond which can form in the large chain dimeric partners within the hexadecamer appears to be associated with oxidative stress and protein turnover.

It is found in the plastid. The protein resides in the chloroplast. It carries out the reaction 2 (2R)-3-phosphoglycerate + 2 H(+) = D-ribulose 1,5-bisphosphate + CO2 + H2O. It catalyses the reaction D-ribulose 1,5-bisphosphate + O2 = 2-phosphoglycolate + (2R)-3-phosphoglycerate + 2 H(+). Its function is as follows. RuBisCO catalyzes two reactions: the carboxylation of D-ribulose 1,5-bisphosphate, the primary event in carbon dioxide fixation, as well as the oxidative fragmentation of the pentose substrate in the photorespiration process. Both reactions occur simultaneously and in competition at the same active site. The protein is Ribulose bisphosphate carboxylase large chain of Zygnema circumcarinatum (Green alga).